A 247-amino-acid polypeptide reads, in one-letter code: tRNA (guanine-N(1)-)-methyltransferase (247 aa).

S-adenosyl-L-methionine contacts are provided by residues G115 and 135-140 (IGDYVL).

The protein belongs to the RNA methyltransferase TrmD family. In terms of assembly, homodimer.

The protein resides in the cytoplasm. The catalysed reaction is guanosine(37) in tRNA + S-adenosyl-L-methionine = N(1)-methylguanosine(37) in tRNA + S-adenosyl-L-homocysteine + H(+). Its function is as follows. Specifically methylates guanosine-37 in various tRNAs. In Alkaliphilus metalliredigens (strain QYMF), this protein is tRNA (guanine-N(1)-)-methyltransferase.